The following is a 524-amino-acid chain: uncharacterized protein (524 aa).

Residues 1–21 (MLLRSVWYKLGSLLIILPLTG) form the signal peptide. A lipid anchor (N-palmitoyl cysteine) is attached at Cys22. The S-diacylglycerol cysteine moiety is linked to residue Cys22.

Belongs to the MG067/MG068/MG395 family.

The protein localises to the cell membrane. This is an uncharacterized protein from Mycoplasma pneumoniae (strain ATCC 29342 / M129 / Subtype 1) (Mycoplasmoides pneumoniae).